The following is a 523-amino-acid chain: 2-isopropylmalate synthase (523 aa).

One can recognise a Pyruvate carboxyltransferase domain in the interval 5–267; the sequence is VIIFDTTLRD…HTNINHHEIW (263 aa). The Mn(2+) site is built by aspartate 14, histidine 202, histidine 204, and asparagine 238. Residues 392–523 are regulatory domain; the sequence is RLDYFSVQSG…QNKENNKETV (132 aa).

The protein belongs to the alpha-IPM synthase/homocitrate synthase family. LeuA type 1 subfamily. In terms of assembly, homodimer. It depends on Mn(2+) as a cofactor.

It is found in the cytoplasm. It catalyses the reaction 3-methyl-2-oxobutanoate + acetyl-CoA + H2O = (2S)-2-isopropylmalate + CoA + H(+). Its pathway is amino-acid biosynthesis; L-leucine biosynthesis; L-leucine from 3-methyl-2-oxobutanoate: step 1/4. Catalyzes the condensation of the acetyl group of acetyl-CoA with 3-methyl-2-oxobutanoate (2-ketoisovalerate) to form 3-carboxy-3-hydroxy-4-methylpentanoate (2-isopropylmalate). This chain is 2-isopropylmalate synthase, found in Salmonella agona (strain SL483).